The chain runs to 1098 residues: NACHT, LRR and PYD domains-containing protein 5 (1098 aa).

The region spanning 1–97 is the Pyrin domain; that stretch reads MREAKIAPLS…SEMARDEMKK (97 aa). Residues 104–131 are disordered; sequence SEDSAPTKTDQGPSMKEVPGPREDPQDS. Positions 122–131 are enriched in basic and acidic residues; sequence PGPREDPQDS. The NACHT domain maps to 180 to 503; that stretch reads LTVVLHGPPG…ALFYVLRGVE (324 aa). 186 to 193 contacts ATP; sequence GPPGVGKS. LRR repeat units lie at residues 851–871, 880–900, 908–928, 937–958, 965–985, 993–1013, and 1021–1041; these read GLTHLSLSGDELGSKGMSLLC, GLQKLALNACSLDVAGCGFLA, HLTHLSLSMNPLEDPGMNLLC, PLRDLDLVNCRLTASCCKSLSN, RLRSLDLAANALGDEGIAALC, TLTRLGLEACGLTSEGCKALS, and HLASLNLMRNDLGPRGMTTLC.

Belongs to the NLRP family. In terms of assembly, component of the subcortical maternal complex (SCMC), at least composed of NLRP5, KHDC3, OOEP, and TLE6. Within the complex, interacts with OOEP, KHDC3 and TLE6. The SCMC may facilitate translocation of its components between the nuclear and cytoplasmic compartments. As part of the SCMC interacts with the SCMC-associated protein ZBED3. As part of the SCMC interacts with the SCMC-associated protein CFL1/Cofilin-1. Interacts with PRKCE. Interacts with TUBB3 at cytoskeleton microtubules. Post-translationally, phosphorylated by PRKCE. In terms of tissue distribution, oocyte-specific.

The protein resides in the cytoplasm. It localises to the cytoplasmic vesicle. It is found in the secretory vesicle. The protein localises to the cortical granule. Its subcellular location is the mitochondrion. The protein resides in the nucleus. It localises to the nucleolus. It is found in the golgi apparatus. Functionally, component of the subcortical maternal complex (SCMC), a multiprotein complex that plays a key role in early embryonic development. The SCMC complex is a structural constituent of cytoplasmic lattices, which consist in fibrous structures found in the cytoplasm of oocytes and preimplantation embryos. They are required to store maternal proteins critical for embryonic development, such as proteins that control epigenetic reprogramming of the preimplantation embryo, and prevent their degradation or activation. Required for the localization of cortical granules to the cortex of oocytes, via association with the cortical actin scaffold. Required for cortical actin clearance prior to oocyte exocytosis and prevention of polyspermy. Involved in regulating post-fertilization Ca(2+) release and endoplasmic reticulum storage (ER) storage via regulation of cellular localization. May be involved in the localization of mitochondria to the cytoplasm and perinuclear region in oocytes and early stage embryos, independent of its role in CPL formation. This Bos taurus (Bovine) protein is NACHT, LRR and PYD domains-containing protein 5 (NLRP5).